Here is a 740-residue protein sequence, read N- to C-terminus: Probable RNA-dependent RNA polymerase 1 (740 aa).

The protein belongs to the RdRP family.

It catalyses the reaction RNA(n) + a ribonucleoside 5'-triphosphate = RNA(n+1) + diphosphate. Functionally, probably involved in the RNA silencing pathway and required for the generation of small interfering RNAs (siRNAs). The polypeptide is Probable RNA-dependent RNA polymerase 1 (RDR1) (Oryza sativa subsp. japonica (Rice)).